The following is a 325-amino-acid chain: Small ribosomal subunit protein RACK1 (325 aa).

WD repeat units lie at residues 13–44 (AHTD…ILWH), 61–91 (GHSH…RLWD), 103–133 (GHTK…KLWN), 147–179 (AHSD…KVWN), 191–221 (GHSG…LLWD), 232–261 (DAGS…KIWD), and 291–321 (KKVI…RVWG).

This sequence belongs to the WD repeat G protein beta family. Ribosomal protein RACK1 subfamily.

Functionally, plays a role in hormone-mediated cell division. This is Small ribosomal subunit protein RACK1 (GB1) from Medicago sativa (Alfalfa).